The sequence spans 259 residues: Proliferating cell nuclear antigen (259 aa).

Residues 61–80 mediate DNA binding; the sequence is RCDRNIALGVNLTSLTKVLR. A Glycyl lysine isopeptide (Lys-Gly) (interchain with G-Cter in SUMO); alternate cross-link involves residue K164. K164 participates in a covalent cross-link: Glycyl lysine isopeptide (Lys-Gly) (interchain with G-Cter in ubiquitin); alternate.

This sequence belongs to the PCNA family. Homotrimer. In terms of processing, monoubiquitinated on Lys-164 upon DNA damage, and then polyubiquitinated through 'Lys-63'-linkage.

It localises to the nucleus. This protein is an auxiliary protein of DNA polymerase delta and is involved in the control of eukaryotic DNA replication by increasing the polymerase's processibility during elongation of the leading strand. Involved in DNA repair. The sequence is that of Proliferating cell nuclear antigen from Chaetomium thermophilum (strain DSM 1495 / CBS 144.50 / IMI 039719) (Thermochaetoides thermophila).